Here is a 487-residue protein sequence, read N- to C-terminus: Chromosomal replication initiator protein DnaA (487 aa).

A domain I, interacts with DnaA modulators region spans residues 1-79 (MEKSKNIWSL…GYNNIVIVFT (79 aa)). The interval 79 to 142 (TNQPPKTHSN…EEEPTNFKNP (64 aa)) is domain II. A domain III, AAA+ region region spans residues 143–359 (FLKKRYTFEN…AAVTKLKAYI (217 aa)). The ATP site is built by Gly187, Gly189, Lys190, and Thr191. The interval 360–487 (DLDNIEIDIE…TELMNKIKKN (128 aa)) is domain IV, binds dsDNA.

The protein belongs to the DnaA family. In terms of assembly, oligomerizes as a right-handed, spiral filament on DNA at oriC.

It is found in the cytoplasm. Plays an essential role in the initiation and regulation of chromosomal replication. ATP-DnaA binds to the origin of replication (oriC) to initiate formation of the DNA replication initiation complex once per cell cycle. Binds the DnaA box (a 9 base pair repeat at the origin) and separates the double-stranded (ds)DNA. Forms a right-handed helical filament on oriC DNA; dsDNA binds to the exterior of the filament while single-stranded (ss)DNA is stabiized in the filament's interior. The ATP-DnaA-oriC complex binds and stabilizes one strand of the AT-rich DNA unwinding element (DUE), permitting loading of DNA polymerase. After initiation quickly degrades to an ADP-DnaA complex that is not apt for DNA replication. Binds acidic phospholipids. The chain is Chromosomal replication initiator protein DnaA from Borreliella burgdorferi (strain ZS7) (Borrelia burgdorferi).